The sequence spans 395 residues: Flap endonuclease 1 (395 aa).

Residues 1–108 (MGILGLSKLL…DELETRRQKA (108 aa)) are N-domain. Position 34 (D34) interacts with Mg(2+). R74 contributes to the DNA binding site. The Mg(2+) site is built by D90, E162, E164, D183, and D185. Residues 126-257 (MMEKMSKRTV…QRAWEGIQRY (132 aa)) are I-domain. E162 is a DNA binding site. G235 and D237 together coordinate DNA. D237 serves as a coordination point for Mg(2+). The segment at 340-348 (TQGRLDNFF) is interaction with PCNA.

This sequence belongs to the XPG/RAD2 endonuclease family. FEN1 subfamily. As to quaternary structure, interacts with PCNA. Three molecules of FEN1 bind to one PCNA trimer with each molecule binding to one PCNA monomer. PCNA stimulates the nuclease activity without altering cleavage specificity. Mg(2+) serves as cofactor. Phosphorylated. Phosphorylation upon DNA damage induces relocalization to the nuclear plasma.

The protein localises to the nucleus. It localises to the nucleolus. Its subcellular location is the nucleoplasm. It is found in the mitochondrion. Its function is as follows. Structure-specific nuclease with 5'-flap endonuclease and 5'-3' exonuclease activities involved in DNA replication and repair. During DNA replication, cleaves the 5'-overhanging flap structure that is generated by displacement synthesis when DNA polymerase encounters the 5'-end of a downstream Okazaki fragment. It enters the flap from the 5'-end and then tracks to cleave the flap base, leaving a nick for ligation. Also involved in the long patch base excision repair (LP-BER) pathway, by cleaving within the apurinic/apyrimidinic (AP) site-terminated flap. Acts as a genome stabilization factor that prevents flaps from equilibrating into structures that lead to duplications and deletions. Also possesses 5'-3' exonuclease activity on nicked or gapped double-stranded DNA, and exhibits RNase H activity. Also involved in replication and repair of rDNA and in repairing mitochondrial DNA. In Leishmania braziliensis, this protein is Flap endonuclease 1.